A 366-amino-acid chain; its full sequence is Chorismate synthase (366 aa).

2 residues coordinate NADP(+): R48 and R54. FMN-binding positions include 125–127, 238–239, G278, 293–297, and R319; these read RSS, NA, and KPTSS.

This sequence belongs to the chorismate synthase family. Homotetramer. It depends on FMNH2 as a cofactor.

The catalysed reaction is 5-O-(1-carboxyvinyl)-3-phosphoshikimate = chorismate + phosphate. It participates in metabolic intermediate biosynthesis; chorismate biosynthesis; chorismate from D-erythrose 4-phosphate and phosphoenolpyruvate: step 7/7. Catalyzes the anti-1,4-elimination of the C-3 phosphate and the C-6 proR hydrogen from 5-enolpyruvylshikimate-3-phosphate (EPSP) to yield chorismate, which is the branch point compound that serves as the starting substrate for the three terminal pathways of aromatic amino acid biosynthesis. This reaction introduces a second double bond into the aromatic ring system. This is Chorismate synthase from Chromobacterium violaceum (strain ATCC 12472 / DSM 30191 / JCM 1249 / CCUG 213 / NBRC 12614 / NCIMB 9131 / NCTC 9757 / MK).